The following is a 1068-amino-acid chain: Rho family-interacting cell polarization regulator 2 (1068 aa).

Phosphoserine; in isoform is present on residues Ser21 and Ser37. Positions 45 to 73 are disordered; sequence LKKPQAKLKKMHNLGHKNNNPPKEPQPKR. Residues 48–59 show a composition bias toward basic residues; the sequence is PQAKLKKMHNLG. The segment at 55–113 is involved in cell filopodia formation; the sequence is MHNLGHKNNNPPKEPQPKRVEEVYRALKNGLDEYLEVHQTELDKLTAQLKDMKRNSRLG. Residues 83–112 are a coiled coil; that stretch reads NGLDEYLEVHQTELDKLTAQLKDMKRNSRL. At Ser341 the chain carries Phosphoserine; in isoform 2. The span at 474–491 shows a compositional bias: polar residues; the sequence is QNEGMDDTSSASSRNSLG. A disordered region spans residues 474-524; it reads QNEGMDDTSSASSRNSLGEGQEPKSHLKEEDPEEPRKPASAPSEACRRQSS. Over residues 494–510 the composition is skewed to basic and acidic residues; sequence QEPKSHLKEEDPEEPRK. Ser523 bears the Phosphoserine; in isoform 2 mark. Position 573 is a phosphoserine (Ser573). Ser585 carries the phosphoserine; in isoform 2 modification. A coiled-coil region spans residues 768–793; it reads VARSLLEKLSRQIQVMEKLAAVSDEN.

This sequence belongs to the RIPOR family. As to quaternary structure, homooligomer; homooligomerization is regulated by RHOC and leads to the formation of concatemers through the association of N- and C-termini. Interacts with 14-3-3 proteins; these interactions occur during myogenic cell differentiation. Interacts with HDAC6; this interaction occurs during early myogenic differentiation and prevents HDAC6 to deacetylate tubulin. Interacts with DYSF; this interaction occurs during early myogenic differentiation. Interacts with MYOF. Interacts with RHOC. Isoform 1 and isoform 2 interact (via active GTP- or inactive GDP-bound forms) with RHOA; these interactions are direct, block the loading of GTP to RHOA and decrease upon chemokine CCL19 stimulation in primary T lymphocytes. Isoform 2 interacts (phosphorylated form) with HDAC6; this interaction induces T cell proliferation arrest. Isoform 2 interacts (phosphorylated form) with 14-3-3 proteins; these interactions induces T cell proliferation arrest. Isoform 2 interacts with 14-3-3 proteins. Isoform 2 interacts (via phosphorylated form) with YWHAB; this interaction occurs in a chemokine-dependent manner and does not compete for binding of RIPOR2 with RHOA nor blocks inhibition of RIPOR2-mediated RHOA activity. Isoform 2 interacts with YWHAE. Isoform 2 interacts with YWHAQ. Post-translationally, phosphorylated. Isoform 2 is phosphorylated in T cells. Chemokine-induced phosphorylation of isoform 2 in neutrophils occurs in a PKC- and AKT-dependent manner, resulting in RIPOR2 interaction with YWHAB and stabilization. Isoform 2 is phosphorylated by PKCA, AKT1 and MAPKAPK1A; in vitro. Acetylated during myogenic differentiation. In terms of tissue distribution, expressed in primary fetal mononuclear myoblast. Expressed strongly in naive T lymphocytes. Expressed weakly in activated T lymphocytes (at protein level). Expressed in blood cells and adult tissues of hematopoietic origin, such as the secondary lymphoid organs. Expressed in cytotrophoblast.

Its subcellular location is the cytoplasm. It is found in the cytoskeleton. The protein resides in the cell projection. The protein localises to the filopodium. It localises to the stereocilium. Its subcellular location is the stereocilium membrane. It is found in the apical cell membrane. Acts as an inhibitor of the small GTPase RHOA and plays several roles in the regulation of myoblast and hair cell differentiation, lymphocyte T proliferation and neutrophil polarization. Inhibits chemokine-induced T lymphocyte responses, such as cell adhesion, polarization and migration. Involved also in the regulation of neutrophil polarization, chemotaxis and adhesion. Required for normal development of inner and outer hair cell stereocilia within the cochlea of the inner ear. Plays a role for maintaining the structural organization of the basal domain of stereocilia. Involved in mechanosensory hair cell function. Required for normal hearing. In terms of biological role, acts as an inhibitor of the small GTPase RHOA. Plays a role in fetal mononuclear myoblast differentiation by promoting filopodia and myotube formation. Maintains naive T lymphocytes in a quiescent state. This chain is Rho family-interacting cell polarization regulator 2 (RIPOR2), found in Homo sapiens (Human).